We begin with the raw amino-acid sequence, 212 residues long: Metalloproteinase inhibitor 3 (212 aa).

An N-terminal signal peptide occupies residues 1–24; it reads MTAWLGFLAVFLCSWSLRDLVAEA. Position 25 (Cys25) interacts with Zn(2+). 2 involved in metalloproteinase-binding regions span residues 25-28 and 89-90; these read CTCV and ES. 6 disulfides stabilise this stretch: Cys25/Cys92, Cys27/Cys119, Cys37/Cys144, Cys146/Cys193, Cys151/Cys156, and Cys164/Cys185. An NTR domain is found at 25 to 144; the sequence is CTCVPIHPQD…GLNHRYHLGC (120 aa).

This sequence belongs to the protease inhibitor I35 (TIMP) family.

It is found in the secreted. The protein localises to the extracellular space. It localises to the extracellular matrix. Its function is as follows. Complexes with metalloproteinases (such as collagenases) and irreversibly inactivates them by binding to their catalytic zinc cofactor. May form part of a tissue-specific acute response to remodeling stimuli. The polypeptide is Metalloproteinase inhibitor 3 (TIMP3) (Gallus gallus (Chicken)).